Consider the following 158-residue polypeptide: D-aminoacyl-tRNA deacylase (158 aa).

A Gly-cisPro motif, important for rejection of L-amino acids motif is present at residues 143-144 (GP).

The protein belongs to the DTD family. As to quaternary structure, homodimer.

The protein localises to the cytoplasm. The catalysed reaction is glycyl-tRNA(Ala) + H2O = tRNA(Ala) + glycine + H(+). It carries out the reaction a D-aminoacyl-tRNA + H2O = a tRNA + a D-alpha-amino acid + H(+). Its function is as follows. An aminoacyl-tRNA editing enzyme that deacylates mischarged D-aminoacyl-tRNAs. Also deacylates mischarged glycyl-tRNA(Ala), protecting cells against glycine mischarging by AlaRS. Acts via tRNA-based rather than protein-based catalysis; rejects L-amino acids rather than detecting D-amino acids in the active site. By recycling D-aminoacyl-tRNA to D-amino acids and free tRNA molecules, this enzyme counteracts the toxicity associated with the formation of D-aminoacyl-tRNA entities in vivo and helps enforce protein L-homochirality. The sequence is that of D-aminoacyl-tRNA deacylase from Solidesulfovibrio magneticus (strain ATCC 700980 / DSM 13731 / RS-1) (Desulfovibrio magneticus).